A 177-amino-acid polypeptide reads, in one-letter code: Photosystem I assembly protein Ycf4 (177 aa).

Transmembrane regions (helical) follow at residues 20-40 and 60-80; these read VALLVSIGGVGFLLTSASSYF and LVMGAYGVGAVLLSSYLWAVI.

This sequence belongs to the Ycf4 family.

The protein localises to the cellular thylakoid membrane. Seems to be required for the assembly of the photosystem I complex. In Synechococcus sp. (strain RCC307), this protein is Photosystem I assembly protein Ycf4.